Consider the following 373-residue polypeptide: Probable tRNA sulfurtransferase (373 aa).

Residues 54-158 (NKNIEELSKV…NDVAYFYHKI (105 aa)) enclose the THUMP domain. Residues 176-177 (LF), 201-202 (NF), Lys256, Gly278, and Gln287 contribute to the ATP site.

The protein belongs to the ThiI family.

The protein localises to the cytoplasm. The enzyme catalyses [ThiI sulfur-carrier protein]-S-sulfanyl-L-cysteine + a uridine in tRNA + 2 reduced [2Fe-2S]-[ferredoxin] + ATP + H(+) = [ThiI sulfur-carrier protein]-L-cysteine + a 4-thiouridine in tRNA + 2 oxidized [2Fe-2S]-[ferredoxin] + AMP + diphosphate. It carries out the reaction [ThiS sulfur-carrier protein]-C-terminal Gly-Gly-AMP + S-sulfanyl-L-cysteinyl-[cysteine desulfurase] + AH2 = [ThiS sulfur-carrier protein]-C-terminal-Gly-aminoethanethioate + L-cysteinyl-[cysteine desulfurase] + A + AMP + 2 H(+). It functions in the pathway cofactor biosynthesis; thiamine diphosphate biosynthesis. Its function is as follows. Catalyzes the ATP-dependent transfer of a sulfur to tRNA to produce 4-thiouridine in position 8 of tRNAs, which functions as a near-UV photosensor. Also catalyzes the transfer of sulfur to the sulfur carrier protein ThiS, forming ThiS-thiocarboxylate. This is a step in the synthesis of thiazole, in the thiamine biosynthesis pathway. The sulfur is donated as persulfide by IscS. The protein is Probable tRNA sulfurtransferase of Saccharolobus islandicus (strain M.14.25 / Kamchatka #1) (Sulfolobus islandicus).